The sequence spans 487 residues: Polyamine oxidase 4 (487 aa).

FAD-binding residues include glutamate 53, arginine 61, valine 242, and glutamate 429. Residues 485–487 (CRT) carry the Microbody targeting signal motif.

It belongs to the flavin monoamine oxidase family. Requires FAD as cofactor. As to expression, widely expressed.

The protein localises to the peroxisome. It catalyses the reaction spermine + O2 + H2O = 3-aminopropanal + spermidine + H2O2. The catalysed reaction is norspermine + O2 + H2O = norspermidine + 3-aminopropanal + H2O2. The enzyme catalyses thermospermine + O2 + H2O = 3-aminopropanal + spermidine + H2O2. It functions in the pathway amine and polyamine degradation; spermine degradation. Functionally, flavoenzyme involved in polyamine back-conversion. Catalyzes the oxidation of the secondary amino group of polyamines, such as spermine. Substrate preference is spermine &gt; thermospermine &gt; norspermine. No activity detected when putrescine, spermidine or N(1)-acetylspermidine are used as substrates. Plays an important role in the regulation of polyamine intracellular concentration. This chain is Polyamine oxidase 4, found in Oryza sativa subsp. japonica (Rice).